The sequence spans 187 residues: Peptidyl-tRNA hydrolase (187 aa).

Y14 is a tRNA binding site. The active-site Proton acceptor is the H19. The tRNA site is built by Y64, N66, and N112.

It belongs to the PTH family. Monomer.

The protein localises to the cytoplasm. The enzyme catalyses an N-acyl-L-alpha-aminoacyl-tRNA + H2O = an N-acyl-L-amino acid + a tRNA + H(+). Hydrolyzes ribosome-free peptidyl-tRNAs (with 1 or more amino acids incorporated), which drop off the ribosome during protein synthesis, or as a result of ribosome stalling. In terms of biological role, catalyzes the release of premature peptidyl moieties from peptidyl-tRNA molecules trapped in stalled 50S ribosomal subunits, and thus maintains levels of free tRNAs and 50S ribosomes. This chain is Peptidyl-tRNA hydrolase, found in Clostridium acetobutylicum (strain ATCC 824 / DSM 792 / JCM 1419 / IAM 19013 / LMG 5710 / NBRC 13948 / NRRL B-527 / VKM B-1787 / 2291 / W).